The primary structure comprises 513 residues: Protein disulfide-isomerase 2 (513 aa).

A signal peptide spans 1-20; it reads MNKFLALLFVLALFANIAFS. 2 consecutive Thioredoxin domains span residues 21-147 and 355-486; these read CEGH…EELK and DVIG…DNAA. Catalysis depends on nucleophile residues cysteine 70, cysteine 73, cysteine 406, and cysteine 409. Cystine bridges form between cysteine 70-cysteine 73 and cysteine 406-cysteine 409. The interval 491-513 is disordered; sequence LPSSQTDDNVESKKDSSAKHDEL. The span at 500–513 shows a compositional bias: basic and acidic residues; it reads VESKKDSSAKHDEL. The Prevents secretion from ER motif lies at 510–513; that stretch reads HDEL.

Belongs to the protein disulfide isomerase family.

The protein localises to the endoplasmic reticulum lumen. It catalyses the reaction Catalyzes the rearrangement of -S-S- bonds in proteins.. Functionally, participates in the folding of proteins containing disulfide bonds, may be involved in glycosylation, prolyl hydroxylation and triglyceride transfer. The sequence is that of Protein disulfide-isomerase 2 (pdi2) from Dictyostelium discoideum (Social amoeba).